A 453-amino-acid chain; its full sequence is Aryl hydrocarbon receptor nuclear translocator homolog (453 aa).

Residues 44–97 (FARENHSEIERRRRNKMTHYINELAEMVPQCASLGRKPDKLTILRMAVSHMKGI) form the bHLH domain. PAS domains lie at 115 to 193 (DQEL…LDLK) and 277 to 347 (ASMP…LSDQ). The region spanning 348-392 (PMRINIRVRTSTDYIPCTVSAYKFMNPYSEQFEYVVATHQIAPQE) is the PAC domain. Residues 410–453 (EFGELGGAPSAVDYGQSSSGGWRPEAQGAPQAQWQWDPMNGYNQ) are disordered.

In terms of assembly, interacts with hif-1. Heterodimer; efficient DNA binding requires dimerization with another bHLH protein. Forms a heterodimer with ahr-1; binds DNA as heterodimer. Forms a heterodimer with PAS domain-containing protein cky-1; binds DNA as heterodimer. As to expression, expressed in many cell types throughout development, including hypodermal cells, intestinal cells, pharyngeal cells, and neurons. Expressed in every cell during embryo.

It localises to the nucleus. In terms of biological role, transcription factor. Efficient DNA binding requires dimerization with another bHLH protein, such as cky-1 or ahr-1. Regulates transcription of target genes, probably acting in complex with cky-1. Has a role in cellular differentiation. Required for pharyngeal development. In collaboration with ahr-1 it is involved in RMEL/R and SDQR neuron cell migration. Acts in the cellular response to hypoxia. Involved in aggregation behavior by regulating soluble guanylate cyclase gene expression in the URX neurons. In Caenorhabditis elegans, this protein is Aryl hydrocarbon receptor nuclear translocator homolog.